The chain runs to 94 residues: MNLAMLHDNVLVEALEDSNPNSPIQLPDSAKKKPTKGKVVSVGPGASNSDGKVTPMSVKVGDCVYYRQWAGNEIEFDGKKFIVMKESDIIAKEA.

The tract at residues 17–53 (DSNPNSPIQLPDSAKKKPTKGKVVSVGPGASNSDGKV) is disordered.

The protein belongs to the GroES chaperonin family. In terms of assembly, heptamer of 7 subunits arranged in a ring. Interacts with the chaperonin GroEL.

The protein localises to the cytoplasm. Its function is as follows. Together with the chaperonin GroEL, plays an essential role in assisting protein folding. The GroEL-GroES system forms a nano-cage that allows encapsulation of the non-native substrate proteins and provides a physical environment optimized to promote and accelerate protein folding. GroES binds to the apical surface of the GroEL ring, thereby capping the opening of the GroEL channel. The chain is Co-chaperonin GroES from Anaplasma phagocytophilum (strain HZ).